Reading from the N-terminus, the 381-residue chain is NF-kappa-B inhibitor-like protein 1 (381 aa).

A disordered region spans residues 1–34; it reads MSNPSPQAPEEEASTSVCRPQSCSMASASRRHRR. Residues 14–27 show a composition bias toward polar residues; sequence STSVCRPQSCSMAS. 2 ANK repeats span residues 64 to 93 and 97 to 134; these read AGQP…ADPA and RHGD…IKNK. Disordered stretches follow at residues 132–167 and 186–298; these read KNKD…REWR and EDDA…WRFG. A Phosphoserine modification is found at Ser151. The span at 151–160 shows a compositional bias: acidic residues; the sequence is SAEEEEDEEV. Composition is skewed to basic and acidic residues over residues 205–218 and 237–290; these read RLAR…RQQL and RQHE…RGAE.

In terms of assembly, interacts with CACTIN (via N-terminal domain); the interaction occurs in a pro-inflammatory-independent manner. As to expression, high expression found in heart muscle, liver, kidney and skin. Not detected in spleen, lung and brain.

Its subcellular location is the nucleus. In terms of biological role, involved in the regulation of innate immune response. Acts as negative regulator of Toll-like receptor and interferon-regulatory factor (IRF) signaling pathways. Contributes to the negative regulation of transcriptional activation of NF-kappa-B target genes in response to endogenous pro-inflammatory stimuli. The sequence is that of NF-kappa-B inhibitor-like protein 1 (Nfkbil1) from Mus musculus (Mouse).